Consider the following 692-residue polypeptide: Aspartate--tRNA ligase, mitochondrial (692 aa).

Residues 1 to 61 constitute a mitochondrion transit peptide; it reads MNRVILKDSK…RNFTNTINNN (61 aa). An L-aspartate-binding site is contributed by E264. The interval 287-290 is aspartate; sequence QQYK. R309 contacts L-aspartate. ATP-binding positions include 309 to 311 and E590; that span reads RDE. R597 contacts L-aspartate. An ATP-binding site is contributed by 642 to 645; it reads GFDR.

Belongs to the class-II aminoacyl-tRNA synthetase family. Type 1 subfamily.

It localises to the mitochondrion matrix. It carries out the reaction tRNA(Asp) + L-aspartate + ATP = L-aspartyl-tRNA(Asp) + AMP + diphosphate. This Dictyostelium discoideum (Social amoeba) protein is Aspartate--tRNA ligase, mitochondrial (maspS).